The chain runs to 454 residues: Protein odr-4 homolog (454 aa).

A run of 2 helical transmembrane segments spans residues 82-102 (MLPG…ELAN) and 432-452 (IGVI…FHYF).

This sequence belongs to the ODR-4 family.

Its subcellular location is the membrane. Its function is as follows. May play a role in the trafficking of a subset of G-protein coupled receptors. The chain is Protein odr-4 homolog (ODR4) from Pongo abelii (Sumatran orangutan).